A 370-amino-acid chain; its full sequence is Protein RKD5 (370 aa).

The interval 193-232 (DSETESEESVNEKTEHSEFENDKTEQSESDAKTEILKKKK) is disordered. A compositionally biased stretch (basic and acidic residues) spans 202–228 (VNEKTEHSEFENDKTEQSESDAKTEIL). In terms of domain architecture, RWP-RK spans 224–309 (KTEILKKKKR…AEKQQEKNEA (86 aa)). Residues 283 to 328 (HRKIKSLDCLIHDLQREAEKQQEKNEAAAMAVAKKQEKLETEKRNI) are a coiled coil. The interval 347–370 (NFKKRHRASRAKKNQESLVTSSST) is disordered. Positions 349 to 358 (KKRHRASRAK) are enriched in basic residues.

The protein resides in the nucleus. Functionally, putative transcription factor. The polypeptide is Protein RKD5 (RKD5) (Arabidopsis thaliana (Mouse-ear cress)).